Consider the following 561-residue polypeptide: Urocanate hydratase (561 aa).

NAD(+) contacts are provided by residues 52 to 53, glutamine 130, 176 to 178, glutamate 196, arginine 201, 242 to 243, 263 to 267, 273 to 274, and tyrosine 322; these read GG, GMG, NA, QTSAH, and YL. Cysteine 410 is a catalytic residue. Glycine 492 contributes to the NAD(+) binding site.

This sequence belongs to the urocanase family. The cofactor is NAD(+).

The protein localises to the cytoplasm. The enzyme catalyses 4-imidazolone-5-propanoate = trans-urocanate + H2O. It functions in the pathway amino-acid degradation; L-histidine degradation into L-glutamate; N-formimidoyl-L-glutamate from L-histidine: step 2/3. Its function is as follows. Catalyzes the conversion of urocanate to 4-imidazolone-5-propionate. The protein is Urocanate hydratase of Salmonella gallinarum (strain 287/91 / NCTC 13346).